We begin with the raw amino-acid sequence, 276 residues long: Ribosomal RNA small subunit methyltransferase J (276 aa).

S-adenosyl-L-methionine contacts are provided by residues 135-136 and D191; that span reads ER.

Belongs to the methyltransferase superfamily. RsmJ family.

Its subcellular location is the cytoplasm. The enzyme catalyses guanosine(1516) in 16S rRNA + S-adenosyl-L-methionine = N(2)-methylguanosine(1516) in 16S rRNA + S-adenosyl-L-homocysteine + H(+). Functionally, specifically methylates the guanosine in position 1516 of 16S rRNA. This Hydrogenovibrio crunogenus (strain DSM 25203 / XCL-2) (Thiomicrospira crunogena) protein is Ribosomal RNA small subunit methyltransferase J.